The chain runs to 242 residues: Small ribosomal subunit protein uS2 (242 aa).

The protein belongs to the universal ribosomal protein uS2 family.

In Shewanella woodyi (strain ATCC 51908 / MS32), this protein is Small ribosomal subunit protein uS2.